The following is a 297-amino-acid chain: 3-mercaptopyruvate sulfurtransferase (297 aa).

Position 2 is an N-acetylalanine (A2). The Rhodanese 1 domain maps to 25–144 (SSQPLKLLDA…WLNQNLPISS (120 aa)). Phosphoserine is present on S35. K40 carries the N6-acetyllysine; alternate modification. K40 carries the N6-succinyllysine; alternate modification. Positions 145-160 (GKSHSEPAEFSAQLDP) are hinge. An N6-succinyllysine mark is found at K146 and K164. The Rhodanese 2 domain maps to 174-288 (DARRFQVVDA…WYMRAQPEHI (115 aa)). R188 is a substrate binding site. C248 acts as the Cysteine persulfide intermediate in catalysis.

In terms of assembly, monomer (active form). Homodimer; disulfide-linked (inactive form). In terms of tissue distribution, expressed in the brain and retina. In the retina, localized to the inner and outer plexiform layer, the inner and outer nuclear layer and the outer segments of photoreceptors. In the brain, localized to neurons of mitral cell layers, glomerular, and external plexiform layers in the olfactory bulb. Also found in Purkinje cell stomata and proximal dendrites. In the spinal cord, localized to large neurons. In the cerebral cortex, localized to pyramidial neurons in layers II/III and V, and in layers I-VI of neocortical areas. In the hippocampus, found in CA1 and CA3 pyramidal cells.

The protein resides in the cytoplasm. It is found in the mitochondrion. The protein localises to the synapse. Its subcellular location is the synaptosome. It catalyses the reaction 2-oxo-3-sulfanylpropanoate + [thioredoxin]-dithiol = [thioredoxin]-disulfide + hydrogen sulfide + pyruvate + H(+). With respect to regulation, by oxidative stress, and thioredoxin. Under oxidative stress conditions, the catalytic cysteine site is converted to a sulfenate which inhibits the MPST enzyme activity. Reduced thioredoxin cleaves an intersubunit disulfide bond to turn on the redox switch and reactivate the enzyme. Inhibited by different oxidants, hydrogen peroxide and tetrathionate. Transfer of a sulfur ion to cyanide or to other thiol compounds. Also has weak rhodanese activity. Detoxifies cyanide and is required for thiosulfate biosynthesis. Acts as an antioxidant. In combination with cysteine aminotransferase (CAT), contributes to the catabolism of cysteine and is an important producer of hydrogen sulfide in the brain, retina and vascular endothelial cells. Hydrogen sulfide H(2)S is an important synaptic modulator, signaling molecule, smooth muscle contractor and neuroprotectant. Its production by the 3MST/CAT pathway is regulated by calcium ions. The chain is 3-mercaptopyruvate sulfurtransferase (Mpst) from Mus musculus (Mouse).